We begin with the raw amino-acid sequence, 144 residues long: Large ribosomal subunit protein uL13 (144 aa).

This sequence belongs to the universal ribosomal protein uL13 family. Part of the 50S ribosomal subunit.

Its function is as follows. This protein is one of the early assembly proteins of the 50S ribosomal subunit, although it is not seen to bind rRNA by itself. It is important during the early stages of 50S assembly. The polypeptide is Large ribosomal subunit protein uL13 (Clostridium tetani (strain Massachusetts / E88)).